We begin with the raw amino-acid sequence, 2641 residues long: MTSQYGTNGASADPEPIAIVGMGCRWPGGVRDASSLWELLKNKRSGYREFGDHRFSRKGFHHPNSEHPGTVATEGGFLLAEDPRLFDHAFFGIGSLEVETMDPSQRKLLEVVYEAFENSGEPWDSFSGSTTGVFVGNFSSDHLIIQGRDTDHPRPYASVGTGTSILSNRVNYIFNLRGPSVTIDTACSSSMYALHLAISAIRNGDCDSAIVAASNTIIDPSTXLMMTKLGVLSPTSTSHTFDSSADGYARGEGFSALYLKRMSTAVDGDYPIRALVRGSALNANGRTGGITHPGREGQEAVIRKAYENAGNLPMKDTTFFECHGTGTPVGDPIEISAIGNVFGSATTPEKPLLVGSIKTNIGHTEPASAIAGIMKVVLALENGFIPPSIGIKKLNPKLDLKGGRINILTENTPWPDGRVRRASVNSFGYGGANGHCIIDDVRTVLPDYKKRTANTSIGHINGHTNGHTNGHTNGHTNGHTNGHTNGHTNGAHASDGHNGHHQNGMNGNSASHMSEKADKVHYPFSYKPTLVKDFNAKPRRRVLIPFSAHNEASLDLNITAISEAIKRENLADVAYTLAAKRSRFMQRTFRIVDSESPANGFAVKEKVLASGTQTARLGFVFTGQGAQWHAMGADLFEYAVFRTSIEYLDSILASLPTPSAWKIEDILAGNCDPNDIHKPEVSQTVCTAVQIGLVDLLYTWNVRPSAAVGHSSGEIAATYAAGRITAAQAIAAAYFRGQAVSKNKSKGLMLAVGLGLDKAEAYISGLDSSVRIAAINSPDSVTLSGDESTIKDVAAKLNEDKVFNRELKTGGNAYHSHHMLALGEFYNSTLSEGLDYVKSLGQAEPSQLYATRPWMSSVYPSKSTENPPVSPSYWRANLESPVRFSEALANMLNLPDPIDVLVEIGPHPALKGPVGQISRSVDKSLPYFPTLNRGTNGGISLLQLAGSLFSLNAEVDLTAVNAVDVISANQLKLVHGTTATNLPPYQYAYGPVIYHESRFSKEFRGRDIVRHDLLGSKLPGNAKLRPQWRNILRLKDLPWLNDHKLLPYPVFPAAGYIATVIEAASRIYNEQSEPLDITGYKLRNVTFSSAMRLPDDDFGLEIITSLELADAANPKAPTWATFSISSVAREAGTWTEHCSGRVRVIAGTSVANEKMSTEMDARTLDTKAWYKKFAEIGLGYGPTFQPLSNIRADPSKGLAVAQLALHTTRDTVEGGESNYPLHPASLDAVFQLSLVASHGGQIDRVCNAFVPVHIDQLYVRNGVSQDSAVAIALGSMKGLRSAHAKLQVLDKSEQVVLDVGNLRCVTYTEVLPSTGADKEAFSIPFLRLSWKPDIRAMDNEQVQRRFPPPTENVEKAYLFDKLERLGTLYVAEIHERYAGQGQFSSAPAHIDNFLSWVRRRMKDDNKWVAEANSLTSSQRGILIKELFAEVGHISDVKIANKVFNNMEDILNERKTGLEVVIPDNLLHGMYEDGLIMTGAYPQLVRFFDLFGYANPNMRILEIGAGTGGATRKILKTLIGPHGIKRYQDYTFTDISSGFLAQAREAFADFQDMKYSVLDIQENPLEHGYEAVYDVVVACECLHATPSIVKTLTNCRKLVKPGGRLVVVENTRAVIGHGLVLGHLSGYWDGIPDGRVESPFLHLEGWNASLNQTGFAGAELVLDDYPAPYTTARTIVSSAVEEPAKVGQSPNGTVHLVHGDNRPELLSRIEHELTERGTEFKVISIGDVETHLPDNSRTVAFADSKSLLVNASENDLKSFKALIRKSANLVWVTFGGIVHGHDPDASITTGLLRTLGTENPASQFLSIDVSPDSDFQEIRLTRTILDQELALSDRIAGESRDYEFVWQEDCLWVSRLVPDVALQDKLELSESRPSRAEMLPLDSQGSVQAAFETPGLLTSLYFKPYEETWKSLPDDWIQVKVAAVGLNWKDLLTSAGRFDMNTFSSEYSGVVAQVGLNVTNVAVGDRVYGYGRGHFGNYVRAPANFAYRMLPGEDFVKMATIPLVGMTAIYSFECVTQLKDQERLLIQSATGGLGLSAIQLAKAKGAEIFATAGTQEKRRYLIDVVGIPASHVFSSRDPADFAKLMEATDGKGFNVILSTSSGELLYDSIKMLAPMGRIIDVGRIDVQNSTSLALELFKRNATFTSFDLAVADDADRALGPALMKAVNKRVRAGQMGPLSSITTYDVSQLDQALMAFSKGTHVGKLVVTFQNPDALVKMVPAAPHAQFARNANYLITGGLGGLGRSIVNFMAERGARHFTVLSRSRKINSEGQMLIDKLATSGTVVECVSCDVSDSKDVARAVQDAAVVRPIKGIVHAAVSYQDLSFDKLAIEQWTSALAAKVQGTKNLHEATKTHALDFFLMTTTIESFVALATQSAYTAANNFQDYFARWRRQQGLPASTVSFGLIRDVGHLSTNSTTLALMARNKVMDISEYNFLRLLEPAFLNNESALDPAASKEPYTGAVDDPLSVTNVVTCFDPATMATRKREEAAENNGNTGNSPRWYTDARVSLIMRAFDDAERYQASAGGGGDGGNERGNNAGVASLRSEFGEAVKAGPAERSRTVALVTDAIVKTVAQMLFVDASGVDASRTVADYGVDSLIAAELRNWFNVAFGADVSMLEMLDTATSMKILANKIVDGALA.

The region spanning Pro14–Asp440 is the Ketosynthase family 3 (KS3) domain. Residues Cys187, His323, and His363 each act as for beta-ketoacyl synthase activity in the active site. A disordered region spans residues Ser456–Glu515. The span at Asn461–Gly490 shows a compositional bias: low complexity. The segment at Phe619–Ser920 is malonyl-CoA:ACP transacylase (MAT). The tract at residues His1011–Ser1149 is N-terminal hotdog fold. Positions His1011–Glu1309 are dehydratase (DH) domain. A PKS/mFAS DH domain is found at His1011–Ser1313. His1043 (proton acceptor; for dehydratase activity) is an active-site residue. Residues Ala1161–Ser1313 are C-terminal hotdog fold. Asp1227 (proton donor; for dehydratase activity) is an active-site residue. Residues Thr1477–Pro1665 are methyltransferase (MT) domain. The enoyl reductase (ER) domain stretch occupies residues Gly1894–Val2206. The interval Asn2231–Asp2408 is ketoreductase (KR) domain. A Carrier domain is found at Arg2561–Ala2639. Ser2598 carries the post-translational modification O-(pantetheine 4'-phosphoryl)serine.

It functions in the pathway phytotoxin biosynthesis. Functionally, prosolanapyrone synthase; part of the gene cluster that mediates the biosynthesis of the phytotoxin solanapyrone, a causal agent of early blight disease of potato and tomato. The prosolanapyrone synthase sol1 is a polyketide synthase that produces the octaketide desmethylprosolanapyrone I via sequential condensations of 7 malonyl-CoA units with one acetyl-CoA unit, and one methylation step. The octaketide backbone is further methylated by the sol2 O-methyltransferase to yield prosolanapyrone I. Prosolanapyrone I is hydroxylated to prosolanapyrone II by the cytochrome P450 monooxygenase sol6. The solanapyrone synthase sol5 then catalyzes the oxidation of prosolanapyrone II and the subsequent Diels Alder cycloisomerization of the product prosolanapyrone III to solanapyrones A and D. Solanapyrones A and D are then converted into solanapyrones B and E, respectively, by the sol3 dehydrogenase. The polypeptide is Prosolanapyrone synthase (sol1) (Alternaria solani).